Here is an 84-residue protein sequence, read N- to C-terminus: Small ribosomal subunit protein bS20 (84 aa).

The segment at 1-25 (MANIVSNEKTYRHTQKVRKENHAKM) is disordered.

This sequence belongs to the bacterial ribosomal protein bS20 family.

Functionally, binds directly to 16S ribosomal RNA. This chain is Small ribosomal subunit protein bS20, found in Ureaplasma urealyticum serovar 10 (strain ATCC 33699 / Western).